The following is a 496-amino-acid chain: Probable cytosol aminopeptidase (496 aa).

Positions 266 and 271 each coordinate Mn(2+). K278 is an active-site residue. D289, D348, and E350 together coordinate Mn(2+). Residue R352 is part of the active site.

It belongs to the peptidase M17 family. Requires Mn(2+) as cofactor.

The protein localises to the cytoplasm. It carries out the reaction Release of an N-terminal amino acid, Xaa-|-Yaa-, in which Xaa is preferably Leu, but may be other amino acids including Pro although not Arg or Lys, and Yaa may be Pro. Amino acid amides and methyl esters are also readily hydrolyzed, but rates on arylamides are exceedingly low.. It catalyses the reaction Release of an N-terminal amino acid, preferentially leucine, but not glutamic or aspartic acids.. Functionally, presumably involved in the processing and regular turnover of intracellular proteins. Catalyzes the removal of unsubstituted N-terminal amino acids from various peptides. The sequence is that of Probable cytosol aminopeptidase from Pseudomonas fluorescens (strain SBW25).